Here is a 258-residue protein sequence, read N- to C-terminus: Thiazole synthase (258 aa).

Residue lysine 97 is the Schiff-base intermediate with DXP of the active site. Residues glycine 158, 184 to 185 (AG), and 206 to 207 (NT) each bind 1-deoxy-D-xylulose 5-phosphate.

This sequence belongs to the ThiG family. Homotetramer. Forms heterodimers with either ThiH or ThiS.

The protein resides in the cytoplasm. The catalysed reaction is [ThiS sulfur-carrier protein]-C-terminal-Gly-aminoethanethioate + 2-iminoacetate + 1-deoxy-D-xylulose 5-phosphate = [ThiS sulfur-carrier protein]-C-terminal Gly-Gly + 2-[(2R,5Z)-2-carboxy-4-methylthiazol-5(2H)-ylidene]ethyl phosphate + 2 H2O + H(+). It functions in the pathway cofactor biosynthesis; thiamine diphosphate biosynthesis. Functionally, catalyzes the rearrangement of 1-deoxy-D-xylulose 5-phosphate (DXP) to produce the thiazole phosphate moiety of thiamine. Sulfur is provided by the thiocarboxylate moiety of the carrier protein ThiS. In vitro, sulfur can be provided by H(2)S. The chain is Thiazole synthase from Bacteroides fragilis (strain ATCC 25285 / DSM 2151 / CCUG 4856 / JCM 11019 / LMG 10263 / NCTC 9343 / Onslow / VPI 2553 / EN-2).